We begin with the raw amino-acid sequence, 637 residues long: Delta(14)-sterol reductase LBR (637 aa).

The Tudor domain occupies 1-62 (MPNRKYADGE…DIRLQSSFKQ (62 aa)). Over 1 to 205 (MPNRKYADGE…KTKELEFGGR (205 aa)) the chain is Nuclear. Residues 57-73 (QSSFKQRKSQSSSSSPS) show a composition bias toward low complexity. The interval 57–151 (QSSFKQRKSQ…SKLLEQQKLK (95 aa)) is disordered. Basic residues predominate over residues 74-97 (RRSRSRSRSRSPGRPAKGRRRSSS). 2 positions are modified to phosphoserine; by PKA: Ser95 and Ser96. Basic and acidic residues-rich tracts occupy residues 98–110 (HSRE…KKII) and 124–151 (NTRR…QKLK). Helical transmembrane passes span 206-226 (FGTF…VLMC), 250-270 (VFGV…LPIG), 288-309 (INGF…YFQF), 317-338 (HFVQ…YLYI), 378-399 (YFCE…MLLA), 403-425 (IHNQ…LYVV), 466-486 (FYLV…ITIL), and 554-574 (PCGF…CLLV).

It belongs to the ERG4/ERG24 family. As to quaternary structure, interacts with DNA. Interaction with DNA is sequence independent with higher affinity for supercoiled and relaxed circular DNA than linear DNA.

Its subcellular location is the nucleus inner membrane. The protein localises to the nucleus. The protein resides in the cytoplasm. It is found in the endoplasmic reticulum membrane. It carries out the reaction 5alpha-cholest-8,14-dien-3beta-ol + NADPH + H(+) = 5alpha-cholest-8-en-3beta-ol + NADP(+). The enzyme catalyses 4,4-dimethyl-5alpha-cholesta-8,24-dien-3beta-ol + NADP(+) = 4,4-dimethyl-5alpha-cholesta-8,14,24-trien-3beta-ol + NADPH + H(+). The catalysed reaction is 4,4-dimethyl-8,14-cholestadien-3beta-ol + NADPH + H(+) = 4,4-dimethyl-5alpha-cholest-8-en-3beta-ol + NADP(+). It participates in steroid biosynthesis; cholesterol biosynthesis. Functionally, catalyzes the reduction of the C14-unsaturated bond of lanosterol, as part of the metabolic pathway leading to cholesterol biosynthesis. Anchors the lamina and the heterochromatin to the inner nuclear membrane. The protein is Delta(14)-sterol reductase LBR (LBR) of Gallus gallus (Chicken).